The primary structure comprises 423 residues: D-threonate kinase (423 aa).

Residues Asp-9, Arg-51, and 81–84 (KIDS) contribute to the substrate site. Residues Ser-245, 355 to 358 (GGDI), and Gly-401 each bind ATP.

It belongs to the four-carbon acid sugar kinase family.

The catalysed reaction is D-threonate + ATP = 4-O-phospho-D-threonate + ADP + H(+). Functionally, catalyzes the ATP-dependent phosphorylation of D-threonate to D-threonate 4-phosphate. Can also phosphorylate 4-hydroxy-L-threonine, with lower efficiency. This side reaction may serve to deal with the toxicity of 4-hydroxy-L-threonine by converting it into 4-hydroxy-L-threonine 4-phosphate, a useful product that can be used by PdxA2. This chain is D-threonate kinase, found in Salmonella typhimurium (strain LT2 / SGSC1412 / ATCC 700720).